The chain runs to 278 residues: Large ribosomal subunit protein uL2 (278 aa).

Disordered stretches follow at residues 26-57 (RSTPEKSLVRPLHSKGGRNNAGRVTVRHQGGG) and 225-278 (VMNP…NKKR). The span at 258 to 278 (RSPKKASNKYIVRRRKTNKKR) shows a compositional bias: basic residues.

It belongs to the universal ribosomal protein uL2 family. As to quaternary structure, part of the 50S ribosomal subunit. Forms a bridge to the 30S subunit in the 70S ribosome.

Functionally, one of the primary rRNA binding proteins. Required for association of the 30S and 50S subunits to form the 70S ribosome, for tRNA binding and peptide bond formation. It has been suggested to have peptidyltransferase activity; this is somewhat controversial. Makes several contacts with the 16S rRNA in the 70S ribosome. This is Large ribosomal subunit protein uL2 from Streptomyces coelicolor (strain ATCC BAA-471 / A3(2) / M145).